The chain runs to 633 residues: MHGLLLAAAGLLSLPLHVVAHPQPSTSLAGRGVDLDAYRMADRSSYMSSDDMKLKQPAIASLSGGNYVDTATEVVKRMMPGMTFRMADDHYVGESGISHLYFRQTMHGMDIDNADFNVNIGKDGKVLSFGHSFYTGPAPDRAPVEKRDFSGPMRAFHGACKALNLPINADKATIQTMNEHEVMFVGTSGAMSDPQGKLCYMAKEDGTLALTWRVETDMGDNWLLSYVDAKETDKVHNVVDYVSHATYQVYRWPIPDPTEGKREIVENPWNLKTSPFTWISDGKTNYTTTRGNNAIAQANFDGGEDYLNNYRPNSKNLKFEYPYAPNMSPPKSYIDASVTQLFYSANIVHDLYYMLGFTEKAGNFQVNNHGQGGKGNDFVILNAQDGSGTNNANFATPPDGKPGRMRVYIWTKAKPARDSSFEAGTVIHEYTHGLSNRLCGGPANSGCLNGMESGGMGEGWGDFFATAIRLKPNDNRNANYVHGEWVNNSPKGNRLYPYSTNLQTNPLVYTSCNKYNEVHAIGTVWCSILYEVLWNLIDKHGKNDGPTPVFENGVPNDGKYLAMKLVLDGMAIQPCKPTFVQARDAIIDADMNLTKGSNKCELWKAFAKRGLGVGAKYDPKNRTGSKAVPKECQ.

A signal peptide spans 1-21; sequence MHGLLLAAAGLLSLPLHVVAH. Residues 22–245 constitute a propeptide that is removed on maturation; sequence PQPSTSLAGR…HNVVDYVSHA (224 aa). N-linked (GlcNAc...) asparagine glycosylation is present at Asn285. Position 428 (His428) interacts with Zn(2+). Residue Glu429 is part of the active site. His432 is a binding site for Zn(2+). Asn592 and Asn621 each carry an N-linked (GlcNAc...) asparagine glycan.

The protein belongs to the peptidase M36 family. The cofactor is Zn(2+).

The protein localises to the secreted. Functionally, secreted metalloproteinase probably acting as a virulence factor. The protein is Extracellular metalloproteinase 5 (MEP5) of Trichophyton rubrum (Athlete's foot fungus).